The primary structure comprises 419 residues: Synaptosomal-associated protein 47 (419 aa).

T-SNARE coiled-coil homology domains are found at residues 108 to 170 (PQGA…LSEL) and 356 to 418 (VLQP…MRKL).

This sequence belongs to the SVAP1 family.

In terms of biological role, may play a role in intracellular membrane fusion. The sequence is that of Synaptosomal-associated protein 47 (snap47) from Danio rerio (Zebrafish).